The following is a 77-amino-acid chain: Neurotoxin LmNaTx21.1 (77 aa).

The signal sequence occupies residues 1-7 (LILVACL). Residues 16 to 76 (KDGYPVDWNN…VEIKGYGRCR (61 aa)) form the LCN-type CS-alpha/beta domain. 4 disulfide bridges follow: cysteine 26–cysteine 75, cysteine 30–cysteine 51, cysteine 37–cysteine 58, and cysteine 41–cysteine 60.

It belongs to the long (4 C-C) scorpion toxin superfamily. Sodium channel inhibitor family. Alpha subfamily. In terms of tissue distribution, expressed by the venom gland.

The protein localises to the secreted. Binds voltage-independently at site-3 of voltage-gated sodium channels (Nav) and inhibits the inactivation of the activated channels, thereby blocking neuronal transmission. In Lychas mucronatus (Chinese swimming scorpion), this protein is Neurotoxin LmNaTx21.1.